We begin with the raw amino-acid sequence, 156 residues long: 6,7-dimethyl-8-ribityllumazine synthase (156 aa).

5-amino-6-(D-ribitylamino)uracil-binding positions include Phe-25, 59-61, and 83-85; these read AWE and AVI. 88–89 contacts (2S)-2-hydroxy-3-oxobutyl phosphate; sequence ST. The active-site Proton donor is the His-91. Asn-116 is a binding site for 5-amino-6-(D-ribitylamino)uracil. Arg-130 lines the (2S)-2-hydroxy-3-oxobutyl phosphate pocket.

It belongs to the DMRL synthase family. As to quaternary structure, forms an icosahedral capsid composed of 60 subunits, arranged as a dodecamer of pentamers.

The catalysed reaction is (2S)-2-hydroxy-3-oxobutyl phosphate + 5-amino-6-(D-ribitylamino)uracil = 6,7-dimethyl-8-(1-D-ribityl)lumazine + phosphate + 2 H2O + H(+). It participates in cofactor biosynthesis; riboflavin biosynthesis; riboflavin from 2-hydroxy-3-oxobutyl phosphate and 5-amino-6-(D-ribitylamino)uracil: step 1/2. In terms of biological role, catalyzes the formation of 6,7-dimethyl-8-ribityllumazine by condensation of 5-amino-6-(D-ribitylamino)uracil with 3,4-dihydroxy-2-butanone 4-phosphate. This is the penultimate step in the biosynthesis of riboflavin. This chain is 6,7-dimethyl-8-ribityllumazine synthase, found in Acinetobacter baumannii (strain AB0057).